A 510-amino-acid chain; its full sequence is NAD(P)H-quinone oxidoreductase subunit 2 B, chloroplastic (510 aa).

Transmembrane regions (helical) follow at residues 24–44 (LLLF…GLIL), 57–77 (IPWL…ALLF), 99–119 (IFQF…VEYI), 124–144 (MAIT…MFLC), 149–169 (LITI…LSGY), 183–203 (YLLM…WLYG), 227–247 (PGIS…LSPA), 295–315 (WHLH…LIAI), 323–343 (MLAY…IVGD), 347–367 (GYAS…GTFA), 395–415 (ALSL…AGFF), 418–438 (LHLF…IGLL), and 484–504 (MIVC…IIAI).

This sequence belongs to the complex I subunit 2 family. NDH is composed of at least 16 different subunits, 5 of which are encoded in the nucleus.

It localises to the plastid. The protein localises to the chloroplast thylakoid membrane. The catalysed reaction is a plastoquinone + NADH + (n+1) H(+)(in) = a plastoquinol + NAD(+) + n H(+)(out). The enzyme catalyses a plastoquinone + NADPH + (n+1) H(+)(in) = a plastoquinol + NADP(+) + n H(+)(out). In terms of biological role, NDH shuttles electrons from NAD(P)H:plastoquinone, via FMN and iron-sulfur (Fe-S) centers, to quinones in the photosynthetic chain and possibly in a chloroplast respiratory chain. The immediate electron acceptor for the enzyme in this species is believed to be plastoquinone. Couples the redox reaction to proton translocation, and thus conserves the redox energy in a proton gradient. The sequence is that of NAD(P)H-quinone oxidoreductase subunit 2 B, chloroplastic from Buxus microphylla (Littleleaf boxwood).